The chain runs to 447 residues: Maintenance of mitochondrial morphology protein 1 (447 aa).

At 1–109 (MKSPNETSFT…VFSAWSFAQG (109 aa)) the chain is on the lumenal side. The helical transmembrane segment at 110 to 130 (LVIGQLSVIVVLIFFIKFFIF) threads the bilayer. The Cytoplasmic portion of the chain corresponds to 131 to 447 (SEGPIKTEGP…DDISMKSTDL (317 aa)). The SMP-LTD domain occupies 208 to 421 (SPETLDWFNV…EPRFQFIKLP (214 aa)).

The protein belongs to the MMM1 family. In terms of assembly, homodimer. Component of the ER-mitochondria encounter structure (ERMES) or MDM complex, composed of MMM1, MDM10, MDM12 and MDM34. An MMM1 homodimer associates with one molecule of MDM12 on each side in a pairwise head-to-tail manner, and the SMP-LTD domains of MMM1 and MDM12 generate a continuous hydrophobic tunnel for phospholipid trafficking.

The protein resides in the endoplasmic reticulum membrane. Functionally, component of the ERMES/MDM complex, which serves as a molecular tether to connect the endoplasmic reticulum (ER) and mitochondria. Components of this complex are involved in the control of mitochondrial shape and protein biogenesis, and function in nonvesicular lipid trafficking between the ER and mitochondria. The MDM12-MMM1 subcomplex functions in the major beta-barrel assembly pathway that is responsible for biogenesis of all outer membrane beta-barrel proteins, and acts in a late step after the SAM complex. The MDM10-MDM12-MMM1 subcomplex further acts in the TOM40-specific pathway after the action of the MDM12-MMM1 complex. Essential for establishing and maintaining the structure of mitochondria and maintenance of mtDNA nucleoids. The chain is Maintenance of mitochondrial morphology protein 1 from Lachancea thermotolerans (strain ATCC 56472 / CBS 6340 / NRRL Y-8284) (Yeast).